The chain runs to 109 residues: Large ribosomal subunit protein P2 (109 aa).

Residues 63-109 (ASVPSGGAGGASGGAAAAGGAAEEAKEEEKEEEKEESDEDMGFGLFD) are disordered. The segment covering 68–79 (GGAGGASGGAAA) has biased composition (gly residues). Residues 91-103 (EKEEEKEESDEDM) are compositionally biased toward acidic residues. Residue serine 99 is modified to Phosphoserine.

The protein belongs to the eukaryotic ribosomal protein P1/P2 family. As to quaternary structure, P1 and P2 exist as dimers at the large ribosomal subunit.

Functionally, plays an important role in the elongation step of protein synthesis. This chain is Large ribosomal subunit protein P2, found in Fusarium culmorum.